Here is a 662-residue protein sequence, read N- to C-terminus: UvrABC system protein B (662 aa).

The 390-residue stretch at 25–414 (TGLNSKKRSQ…GTVVELIIRP (390 aa)) folds into the Helicase ATP-binding domain. 38-45 (GITGSGKT) contributes to the ATP binding site. The short motif at 91–114 (YYDYYQPESYIVRTDTFIEKDSSI) is the Beta-hairpin element. In terms of domain architecture, Helicase C-terminal spans 430 to 592 (QVEDLISEIQ…IIPKTINRAI (163 aa)). The 36-residue stretch at 622–657 (KAHMDKLKKEMFKAASNLEFEQAAKLRNQLKALEEA) folds into the UVR domain.

The protein belongs to the UvrB family. In terms of assembly, forms a heterotetramer with UvrA during the search for lesions. Interacts with UvrC in an incision complex.

The protein localises to the cytoplasm. The UvrABC repair system catalyzes the recognition and processing of DNA lesions. A damage recognition complex composed of 2 UvrA and 2 UvrB subunits scans DNA for abnormalities. Upon binding of the UvrA(2)B(2) complex to a putative damaged site, the DNA wraps around one UvrB monomer. DNA wrap is dependent on ATP binding by UvrB and probably causes local melting of the DNA helix, facilitating insertion of UvrB beta-hairpin between the DNA strands. Then UvrB probes one DNA strand for the presence of a lesion. If a lesion is found the UvrA subunits dissociate and the UvrB-DNA preincision complex is formed. This complex is subsequently bound by UvrC and the second UvrB is released. If no lesion is found, the DNA wraps around the other UvrB subunit that will check the other stand for damage. In Rickettsia prowazekii (strain Madrid E), this protein is UvrABC system protein B.